The sequence spans 376 residues: MSKRDYYEVLGVGRDTSEREIKKAYKRLAMKFHPDRNPGDKAAEASFKEIKEAYEILTDSDKKAAYDQFGHAGVDPNRGGHGGGQGDFGDIFGDVFGDIFGGGRRGGGQRQAARGSDLRYNLELSLEEAVRGLTKELRIPTLAACDLCDGSGAKKGTSATTCGTCHGQGQVQMRQGFFAVQQACPTCHGRGKIIKDPCGKCHGEGRVEKSKTLSVKIPAGVDTGDRIRLTGEGEAGEFGAPPGDLYVQVSVREHAIFTRDANNLYCEVPISFSKAALGGEIEVPTLDGKVSLKIPTETQTGRMFRLRGKGVKSVRSHAVGDLLCKVVMETPVNLNEKQKELLREFEATLTGESKKHSPKAEGFFDGVKKFFQDLNS.

Positions 5-70 constitute a J domain; it reads DYYEVLGVGR…DKKAAYDQFG (66 aa). Residues 132–210 form a CR-type zinc finger; the sequence is GLTKELRIPT…CHGEGRVEKS (79 aa). The Zn(2+) site is built by Cys-145, Cys-148, Cys-162, Cys-165, Cys-184, Cys-187, Cys-198, and Cys-201. CXXCXGXG motif repeat units lie at residues 145–152, 162–169, 184–191, and 198–205; these read CDLCDGSG, CGTCHGQG, CPTCHGRG, and CGKCHGEG.

This sequence belongs to the DnaJ family. As to quaternary structure, homodimer. The cofactor is Zn(2+).

Its subcellular location is the cytoplasm. Functionally, participates actively in the response to hyperosmotic and heat shock by preventing the aggregation of stress-denatured proteins and by disaggregating proteins, also in an autonomous, DnaK-independent fashion. Unfolded proteins bind initially to DnaJ; upon interaction with the DnaJ-bound protein, DnaK hydrolyzes its bound ATP, resulting in the formation of a stable complex. GrpE releases ADP from DnaK; ATP binding to DnaK triggers the release of the substrate protein, thus completing the reaction cycle. Several rounds of ATP-dependent interactions between DnaJ, DnaK and GrpE are required for fully efficient folding. Also involved, together with DnaK and GrpE, in the DNA replication of plasmids through activation of initiation proteins. In Shewanella frigidimarina (strain NCIMB 400), this protein is Chaperone protein DnaJ.